Consider the following 419-residue polypeptide: UPF0329 protein ECU07_1890/ECU10_0010 (419 aa).

Over residues 136 to 165 the composition is skewed to basic and acidic residues; the sequence is RQRKREEETERSVKELVGDEEKAKSKEEKA. The tract at residues 136 to 222 is disordered; it reads RQRKREEETE…KGGKKKSKGG (87 aa). Residues 213-222 show a composition bias toward basic residues; it reads KGGKKKSKGG.

The protein belongs to the UPF0329 family.

The protein is UPF0329 protein ECU07_1890/ECU10_0010 of Encephalitozoon cuniculi (strain GB-M1) (Microsporidian parasite).